Reading from the N-terminus, the 379-residue chain is tRNA-specific 2-thiouridylase MnmA (379 aa).

ATP-binding positions include alanine 23–serine 30 and leucine 49. Cysteine 117 functions as the Nucleophile in the catalytic mechanism. A disulfide bridge links cysteine 117 with cysteine 214. Residue glycine 141 coordinates ATP. Residues arginine 163–glutamine 165 are interaction with tRNA. The active-site Cysteine persulfide intermediate is cysteine 214.

This sequence belongs to the MnmA/TRMU family.

Its subcellular location is the cytoplasm. The catalysed reaction is S-sulfanyl-L-cysteinyl-[protein] + uridine(34) in tRNA + AH2 + ATP = 2-thiouridine(34) in tRNA + L-cysteinyl-[protein] + A + AMP + diphosphate + H(+). In terms of biological role, catalyzes the 2-thiolation of uridine at the wobble position (U34) of tRNA, leading to the formation of s(2)U34. This Cereibacter sphaeroides (strain ATCC 17023 / DSM 158 / JCM 6121 / CCUG 31486 / LMG 2827 / NBRC 12203 / NCIMB 8253 / ATH 2.4.1.) (Rhodobacter sphaeroides) protein is tRNA-specific 2-thiouridylase MnmA.